The sequence spans 154 residues: Transcriptional repressor NrdR (154 aa).

Residues 3-34 (CPFCGANDTKVIDSRLVAEGEQVRRRRECLAC) fold into a zinc finger. Residues 49–139 (PRLIKTDGSR…VYRRFQDLNE (91 aa)) enclose the ATP-cone domain.

This sequence belongs to the NrdR family. It depends on Zn(2+) as a cofactor.

Its function is as follows. Negatively regulates transcription of bacterial ribonucleotide reductase nrd genes and operons by binding to NrdR-boxes. This Pseudomonas fluorescens (strain Pf0-1) protein is Transcriptional repressor NrdR.